The sequence spans 293 residues: Protease HtpX (293 aa).

A run of 2 helical transmembrane segments spans residues 4 to 24 (IALF…VLSL) and 34 to 54 (GLMI…LLMS). A Zn(2+)-binding site is contributed by His139. Glu140 is a catalytic residue. Position 143 (His143) interacts with Zn(2+). Transmembrane regions (helical) follow at residues 158–178 (IVNT…SGFL) and 193–213 (LVYF…ASII). Glu222 is a binding site for Zn(2+).

This sequence belongs to the peptidase M48B family. Requires Zn(2+) as cofactor.

It localises to the cell inner membrane. The polypeptide is Protease HtpX (Pectobacterium carotovorum subsp. carotovorum (strain PC1)).